A 485-amino-acid polypeptide reads, in one-letter code: Cysteine--tRNA ligase (485 aa).

Cysteine 27 is a binding site for Zn(2+). A 'HIGH' region motif is present at residues 29-39; that stretch reads ITAYDLCHIGH. 3 residues coordinate Zn(2+): cysteine 208, histidine 233, and glutamate 237. The short motif at 265 to 269 is the 'KMSKS' region element; that stretch reads KMSKS. Lysine 268 serves as a coordination point for ATP.

It belongs to the class-I aminoacyl-tRNA synthetase family. As to quaternary structure, monomer. Requires Zn(2+) as cofactor.

The protein resides in the cytoplasm. It carries out the reaction tRNA(Cys) + L-cysteine + ATP = L-cysteinyl-tRNA(Cys) + AMP + diphosphate. The chain is Cysteine--tRNA ligase from Nitratidesulfovibrio vulgaris (strain DSM 19637 / Miyazaki F) (Desulfovibrio vulgaris).